Reading from the N-terminus, the 262-residue chain is MTKQFAVIGNPIEQSRSPELHHAFAEKTGVDLNYQKRLAPLDGFESSMRSFFAEGGSGMNVTVPFKEQAFALCDVLTERAQIAKAVNTLWMENGKLHGDNTDGQGLVAAIQALEWNLENTTILILGAGGATRGVIYPLVQAGAQKIVIANRTLARAEQLVDDLKTAVPQAQLQAISLNDLEGDFDIMINATSTSLSGDALQLPEKLQFKYAYEMAYGKPSSFIDQAKQRNVPYAEGFGMLVGQAIEAFYIWNGVRPQLKDFL.

Residues 15-17 and Thr-62 contribute to the shikimate site; that span reads SRS. Residue Lys-66 is the Proton acceptor of the active site. Glu-78 lines the NADP(+) pocket. Residues Asn-87 and Asp-102 each coordinate shikimate. NADP(+) contacts are provided by residues 126-130, 150-155, and Met-214; these read GAGGA and NRTLAR. Residue Tyr-216 participates in shikimate binding. Residue Gly-236 participates in NADP(+) binding.

This sequence belongs to the shikimate dehydrogenase family. As to quaternary structure, homodimer.

The enzyme catalyses shikimate + NADP(+) = 3-dehydroshikimate + NADPH + H(+). It functions in the pathway metabolic intermediate biosynthesis; chorismate biosynthesis; chorismate from D-erythrose 4-phosphate and phosphoenolpyruvate: step 4/7. Involved in the biosynthesis of the chorismate, which leads to the biosynthesis of aromatic amino acids. Catalyzes the reversible NADPH linked reduction of 3-dehydroshikimate (DHSA) to yield shikimate (SA). The sequence is that of Shikimate dehydrogenase (NADP(+)) from Acinetobacter baumannii (strain AB307-0294).